We begin with the raw amino-acid sequence, 297 residues long: Transcription factor bHLH129 (297 aa).

The segment at Met-1 to Leu-145 is disordered. Phosphoserine is present on Ser-35. Residues Ser-68 to Leu-82 show a composition bias toward low complexity. Over residues Pro-111–Gln-121 the composition is skewed to gly residues. Ser-138 is subject to Phosphoserine. The bHLH domain occupies Phe-239–Leu-289.

Homodimer.

It localises to the nucleus. The protein is Transcription factor bHLH129 (BHLH129) of Arabidopsis thaliana (Mouse-ear cress).